We begin with the raw amino-acid sequence, 144 residues long: Transcription antitermination protein NusB (144 aa).

The protein belongs to the NusB family.

Its function is as follows. Involved in transcription antitermination. Required for transcription of ribosomal RNA (rRNA) genes. Binds specifically to the boxA antiterminator sequence of the ribosomal RNA (rrn) operons. This chain is Transcription antitermination protein NusB, found in Streptomyces avermitilis (strain ATCC 31267 / DSM 46492 / JCM 5070 / NBRC 14893 / NCIMB 12804 / NRRL 8165 / MA-4680).